The primary structure comprises 407 residues: Extracellular superoxide dismutase [Cu-Zn] 3 (407 aa).

Residues 1-19 form the signal peptide; sequence MRLLSVLVFLISVISIAKA. Residues 20-386 lie on the Extracellular side of the membrane; sequence DYQYAFCKFN…SESYNDNEPG (367 aa). 3 N-linked (GlcNAc...) asparagine glycosylation sites follow: N51, N205, and N224. Residues H245 and H247 each contribute to the Cu cation site. The N-linked (GlcNAc...) asparagine glycan is linked to N256. Residue H263 participates in Cu cation binding. Zn(2+) contacts are provided by H263, H271, H280, and D283. A Cu cation-binding site is contributed by H320. Residues N321 and N364 are each glycosylated (N-linked (GlcNAc...) asparagine). A helical transmembrane segment spans residues 387–406; sequence SSSTVIPFFALIIFSIIFAL. A topological domain (cytoplasmic) is located at residue L407.

Belongs to the Cu-Zn superoxide dismutase family. The cofactor is Cu cation. Zn(2+) is required as a cofactor.

Its subcellular location is the cell membrane. The catalysed reaction is 2 superoxide + 2 H(+) = H2O2 + O2. Protect the extracellular space from toxic effect of reactive oxygen intermediates by converting superoxyde radicals into hydrogen peroxyde and oxygen. The polypeptide is Extracellular superoxide dismutase [Cu-Zn] 3 (sodC) (Dictyostelium discoideum (Social amoeba)).